A 79-amino-acid polypeptide reads, in one-letter code: DNA-directed RNA polymerase subunit omega (79 aa).

This sequence belongs to the RNA polymerase subunit omega family. As to quaternary structure, in cyanobacteria the RNAP catalytic core is composed of 2 alpha, 1 beta, 1 beta', 1 gamma and 1 omega subunit. When a sigma factor is associated with the core the holoenzyme is formed, which can initiate transcription.

It catalyses the reaction RNA(n) + a ribonucleoside 5'-triphosphate = RNA(n+1) + diphosphate. Functionally, promotes RNA polymerase assembly. Latches the N- and C-terminal regions of the beta' subunit thereby facilitating its interaction with the beta and alpha subunits. This Synechococcus sp. (strain JA-3-3Ab) (Cyanobacteria bacterium Yellowstone A-Prime) protein is DNA-directed RNA polymerase subunit omega.